Consider the following 277-residue polypeptide: Ribosomal RNA small subunit methyltransferase A (277 aa).

The S-adenosyl-L-methionine site is built by N26, L28, G53, E74, D101, and N123.

The protein belongs to the class I-like SAM-binding methyltransferase superfamily. rRNA adenine N(6)-methyltransferase family. RsmA subfamily.

It is found in the cytoplasm. It catalyses the reaction adenosine(1518)/adenosine(1519) in 16S rRNA + 4 S-adenosyl-L-methionine = N(6)-dimethyladenosine(1518)/N(6)-dimethyladenosine(1519) in 16S rRNA + 4 S-adenosyl-L-homocysteine + 4 H(+). In terms of biological role, specifically dimethylates two adjacent adenosines (A1518 and A1519) in the loop of a conserved hairpin near the 3'-end of 16S rRNA in the 30S particle. May play a critical role in biogenesis of 30S subunits. The sequence is that of Ribosomal RNA small subunit methyltransferase A from Opitutus terrae (strain DSM 11246 / JCM 15787 / PB90-1).